Here is a 194-residue protein sequence, read N- to C-terminus: uncharacterized protein (194 aa).

The first 22 residues, 1–22, serve as a signal peptide directing secretion; the sequence is MNKVTKTAIAGLLALFAGNAAA. Cysteine 38 and cysteine 78 are disulfide-bonded.

This sequence belongs to the fimbrial protein family.

It localises to the fimbrium. Part of the yraHIJK fimbrial operon. Could contribute to adhesion to various surfaces in specific environmental niches. Increases adhesion to eukaryotic T24 bladder epithelial cells in the absence of fim operon. This is an uncharacterized protein from Escherichia coli (strain K12).